A 336-amino-acid polypeptide reads, in one-letter code: dTDP-glucose 4,6-dehydratase (336 aa).

NAD(+) is bound by residues 7–13, 37–40, and 63–64; these read GGAGFIG, DKLT, and DI. Threonine 87 provides a ligand contact to substrate. NAD(+) is bound at residue threonine 102. 127 to 129 provides a ligand contact to substrate; the sequence is TDE. Aspartate 128 acts as the Proton donor in catalysis. Active-site proton acceptor residues include glutamate 129 and tyrosine 151. 151–155 contributes to the NAD(+) binding site; the sequence is YAAAK. Residue asparagine 180 participates in substrate binding. Asparagine 181 is a binding site for NAD(+). Substrate contacts are provided by residues 190–191, 206–208, arginine 215, asparagine 250, and 274–277; these read KL, PVY, and RPGH.

It belongs to the NAD(P)-dependent epimerase/dehydratase family. dTDP-glucose dehydratase subfamily. As to quaternary structure, homodimer. NAD(+) serves as cofactor.

The enzyme catalyses dTDP-alpha-D-glucose = dTDP-4-dehydro-6-deoxy-alpha-D-glucose + H2O. It functions in the pathway antibiotic biosynthesis; novobiocin biosynthesis. In terms of biological role, dTDP-glucose 4,6-dehydratase involved in the generation of the deoxysugar in the novobiocin biosynthesis pathway, an aminocoumarin family antibiotic that targets bacterial DNA gyrases. The chain is dTDP-glucose 4,6-dehydratase (novT) from Streptomyces niveus (Streptomyces spheroides).